A 1544-amino-acid polypeptide reads, in one-letter code: Arf-GAP with Rho-GAP domain, ANK repeat and PH domain-containing protein 3 (1544 aa).

The SAM domain occupies 4–68 (PQDLDIAVWL…LRLLQTGTEE (65 aa)). 2 disordered regions span residues 64–147 (TGTE…EQSS) and 167–194 (GRAQ…PTTG). Composition is skewed to pro residues over residues 82–97 (SPSP…PVPK) and 130–139 (EPSPRPPPLP). PH domains lie at 287 to 379 (TPLL…SCLK) and 394 to 483 (RPLR…EAVT). Residues 480–611 (EAVTETLSDY…LFRKPHPQYP (132 aa)) enclose the Arf-GAP domain. The C4-type zinc-finger motif lies at 504-527 (CADCGSSRPDWAAVNLGVVICKQC). In terms of domain architecture, Rho-GAP spans 907 to 1088 (TGLQEQQMSR…ELIDGYISVF (182 aa)). One can recognise a Ras-associating domain in the interval 1117–1210 (GDLIMEVYIE…ASLLLKKVPL (94 aa)). The region spanning 1223-1325 (ESPRVGLLRC…WTTSILKAQH (103 aa)) is the PH 3 domain. Threonine 1348 is modified (phosphothreonine). A phosphotyrosine mark is found at tyrosine 1403 and tyrosine 1408. The segment at 1422–1544 (STSFSTTREW…SSPPSSQPLT (123 aa)) is disordered. Positions 1438 to 1457 (PLTSQKSLDQPFLSKSSTLG) are enriched in polar residues. A phosphoserine mark is found at serine 1444 and serine 1480. Composition is skewed to low complexity over residues 1482–1492 (EEQLLQELSSL) and 1502–1527 (GLGS…TPGF).

As to quaternary structure, interacts (via SAM domain) with INPPL1/SHIP2. In terms of processing, tyrosine phosphorylated at a low basal level. PDGF treatment stimulates phosphorylation. Tyrosine phosphorylation is increased in cells that are in the process of becoming attached to a substrate and that start spreading and flattening.

Its subcellular location is the cytoplasm. It is found in the cytoskeleton. The protein localises to the cell membrane. The protein resides in the cell projection. It localises to the lamellipodium. Its subcellular location is the ruffle. Its function is as follows. Phosphatidylinositol 3,4,5-trisphosphate-dependent GTPase-activating protein that modulates actin cytoskeleton remodeling by regulating ARF and RHO family members. Is activated by phosphatidylinositol 3,4,5-trisphosphate (PtdIns(3,4,5)P3) binding. Can be activated by phosphatidylinositol 3,4-bisphosphate (PtdIns(3,4,5)P2) binding, albeit with lower efficiency. Acts on ARF6, RAC1, RHOA and CDC42. Plays a role in the internalization of anthrax toxin. The chain is Arf-GAP with Rho-GAP domain, ANK repeat and PH domain-containing protein 3 (ARAP3) from Homo sapiens (Human).